The following is a 168-amino-acid chain: Putative apoptosis regulator A9 (168 aa).

Residues S143–F162 form a helical membrane-spanning segment.

The protein localises to the host membrane. Functionally, suppresses apoptosis in host cell and thus facilitates production of progeny virions. The sequence is that of Putative apoptosis regulator A9 (A9) from Alcelaphine herpesvirus 1 (strain C500) (AlHV-1).